We begin with the raw amino-acid sequence, 407 residues long: M protein, serotype 2.1 (407 aa).

The signal sequence occupies residues 1–41 (MARKDTNKQYSLRKLKTGTASVAVAVAVLGAGFANQTTVKA). Positions 81–94 (VEEEHKKVEEEHKK) are 2 X 7 AA tandem repeats. Composition is skewed to basic and acidic residues over residues 83–144 (EEHK…KRYQ), 152–229 (QLEK…EKQI), 237–264 (LSRDLEASRAAKKDLEAEHQKLKEEKQI), and 272–288 (LSRDLEASREAKKKVEA). Positions 83 to 289 (EEHKKVEEEH…REAKKKVEAD (207 aa)) are disordered. C repeat units lie at residues 151–185 (QQLEKEKQISEASRKSLRRDLEASRAAKKDLEAEH), 186–220 (QKLKEEKQISEASRKSLRRDLEASRAAKKDLEAEH), 221–255 (QKLKEEKQISEASRQGLSRDLEASRAAKKDLEAEH), and 256–290 (QKLKEEKQISEASRQGLSRDLEASREAKKKVEADL). D repeat units follow at residues 323-328 (AKLEAE), 329-334 (AKALKE), 337-342 (AKQAEE), and 344-349 (AKLKGN). The interval 344–382 (AKLKGNQTPNAKVAPQANRSRSAMTQQKRTLPSTGETAN) is disordered. The segment covering 360–380 (ANRSRSAMTQQKRTLPSTGET) has biased composition (polar residues). The LPXTG sorting signal signature appears at 374 to 378 (LPSTG). A Pentaglycyl murein peptidoglycan amidated threonine modification is found at T377. A propeptide spans 378 to 407 (GETANPFFTAAAATVMVSAGMLALKRKEEN) (removed by sortase).

The protein belongs to the M protein family.

The protein resides in the secreted. It is found in the cell wall. Its function is as follows. This protein is one of the different antigenic serotypes of protein M. Protein M is closely associated with virulence of the bacterium and can render the organism resistant to phagocytosis. The sequence is that of M protein, serotype 2.1 (emmL2.1) from Streptococcus pyogenes.